The primary structure comprises 142 residues: Putative arsenate reductase (142 aa).

Belongs to the low molecular weight phosphotyrosine protein phosphatase family.

Reduces arsenate [As(V)] to arsenite [As(III)]. This Halobacterium salinarum (strain ATCC 700922 / JCM 11081 / NRC-1) (Halobacterium halobium) protein is Putative arsenate reductase (arsC).